Consider the following 186-residue polypeptide: ADP-ribosylation factor-like protein 6 (186 aa).

Residue glycine 2 is the site of N-myristoyl glycine attachment. GTP is bound by residues glycine 24–threonine 31, threonine 50, aspartate 69–glutamine 73, glycine 72, asparagine 130–aspartate 133, and alanine 164. Residue threonine 50 participates in Mg(2+) binding.

The protein belongs to the small GTPase superfamily. Arf family. As to quaternary structure, interacts with SEC61B, ARL6IP1, ARL6IP2, ARL6IP3, ARL6IP4 ARL6IP5 and ARL6IP6. Interacts (GTP-bound form) with the BBSome a complex that contains BBS1, BBS2, BBS4, BBS5, BBS7, BBS8/TTC8, BBS9 and BBIP10. Interacts (GTP-free form) with IFT27. As to expression, most abundant in brain and kidney. Expressed in heart and eye. Isoform 2 is expressed only in the retina.

It localises to the cell projection. It is found in the cilium membrane. The protein localises to the cytoplasm. The protein resides in the cytoskeleton. Its subcellular location is the cilium axoneme. It localises to the cilium basal body. Involved in membrane protein trafficking at the base of the ciliary organelle. Mediates recruitment onto plasma membrane of the BBSome complex which would constitute a coat complex required for sorting of specific membrane proteins to the primary cilia. Together with BBS1, is necessary for correct trafficking of PKD1 to primary cilia. Together with the BBSome complex and LTZL1, controls SMO ciliary trafficking and contributes to the sonic hedgehog (SHH) pathway regulation. May regulate cilia assembly and disassembly and subsequent ciliary signaling events such as the Wnt signaling cascade. Isoform 2 may be required for proper retinal function and organization. The protein is ADP-ribosylation factor-like protein 6 (Arl6) of Mus musculus (Mouse).